We begin with the raw amino-acid sequence, 162 residues long: uncharacterized protein (162 aa).

Positions 6–99 constitute an HTH asnC-type domain; sequence LDDLDRAILK…YVTKTLSGFP (94 aa). The H-T-H motif DNA-binding region spans 25–44; the sequence is IAEISNQLKKPESTVHFRIK.

This is an uncharacterized protein from Pyrococcus horikoshii (strain ATCC 700860 / DSM 12428 / JCM 9974 / NBRC 100139 / OT-3).